Here is a 115-residue protein sequence, read N- to C-terminus: U3-lycotoxin-Ls1a (115 aa).

Positions 1–20 (MKFVLLFGVLLVTFFSYSSA) are cleaved as a signal peptide. Residues 21–44 (EMLDDFDQADEDELLSLIEKGEAR) constitute a propeptide that is removed on maturation. 4 disulfide bridges follow: Cys48/Cys63, Cys55/Cys72, Cys62/Cys87, and Cys74/Cys85.

This sequence belongs to the neurotoxin 19 (CSTX) family. 01 subfamily. Expressed by the venom gland.

Its subcellular location is the secreted. This chain is U3-lycotoxin-Ls1a, found in Lycosa singoriensis (Wolf spider).